Reading from the N-terminus, the 399-residue chain is Guanine nucleotide-binding protein negative regulator 1 (399 aa).

6 WD repeats span residues 44-83, 105-145, 150-194, 207-247, 252-292, and 296-337; these read KPLN…LSKK, YSYS…NKAS, DHQE…VMTT, SLKG…PCQL, ERGN…DMVY, and GHRG…EETH.

In terms of assembly, interacts with gpa1.

The protein localises to the cytoplasm. Negatively regulates the pheromone-response pathway. Acts as a structural mimic of the G protein beta subunit thereby interacting with gpa1 which then inhibits gpa1 signaling. The polypeptide is Guanine nucleotide-binding protein negative regulator 1 (gnr1) (Schizosaccharomyces pombe (strain 972 / ATCC 24843) (Fission yeast)).